A 94-amino-acid chain; its full sequence is uncharacterized protein (94 aa).

Functionally, could be a silencing control element for the regulation of the restriction system. This is an uncharacterized protein from Herpetosiphon aurantiacus (Herpetosiphon giganteus).